Reading from the N-terminus, the 199-residue chain is Recombination protein RecR (199 aa).

The C4-type zinc-finger motif lies at 57–72 (CTVCGHITDIDPCAIC). Residues 80-176 (TVVCVVQDSR…RVTRLAHGLP (97 aa)) enclose the Toprim domain.

Belongs to the RecR family.

In terms of biological role, may play a role in DNA repair. It seems to be involved in an RecBC-independent recombinational process of DNA repair. It may act with RecF and RecO. This is Recombination protein RecR from Exiguobacterium sp. (strain ATCC BAA-1283 / AT1b).